Here is a 230-residue protein sequence, read N- to C-terminus: MDANHDKVVESGSRGGRGPVRTICVFCGSRRGNRPSFSAAALDLGKQLVERELDLVYGGGSGGLMGLVSKTVHDGGRHVLGVIPSALLPEEVSGETLGEAKVVRDMHERKSEMAKHADAFIALPGGYGTIEELLEIIAWAQLGIHNKPVGLLNVDGYYNNLLSLFDKGVEEGFIDAAARNIFVLADNAGELLTKLTEAAAAAAAAVEGGDGDQVDGEATAAAAGLKRKRS.

Substrate is bound by residues E91, 109 to 110 (RK), and 126 to 132 (GYGTIEE).

It belongs to the LOG family.

The catalysed reaction is N(6)-(dimethylallyl)adenosine 5'-phosphate + H2O = N(6)-dimethylallyladenine + D-ribose 5-phosphate. It catalyses the reaction 9-ribosyl-trans-zeatin 5'-phosphate + H2O = trans-zeatin + D-ribose 5-phosphate. Cytokinin-activating enzyme working in the direct activation pathway. Phosphoribohydrolase that converts inactive cytokinin nucleotides to the biologically active free-base forms. In Oryza sativa subsp. japonica (Rice), this protein is Probable cytokinin riboside 5'-monophosphate phosphoribohydrolase LOG4 (LOGL4).